Reading from the N-terminus, the 229-residue chain is Cytidylate kinase (229 aa).

10–18 (GHSSSGKST) contacts ATP.

This sequence belongs to the cytidylate kinase family. Type 1 subfamily.

The protein localises to the cytoplasm. The enzyme catalyses CMP + ATP = CDP + ADP. It catalyses the reaction dCMP + ATP = dCDP + ADP. In Parabacteroides distasonis (strain ATCC 8503 / DSM 20701 / CIP 104284 / JCM 5825 / NCTC 11152), this protein is Cytidylate kinase.